We begin with the raw amino-acid sequence, 312 residues long: 3-methyl-2-oxobutanoate hydroxymethyltransferase (312 aa).

This sequence belongs to the PanB family.

It carries out the reaction 3-methyl-2-oxobutanoate + (6R)-5,10-methylene-5,6,7,8-tetrahydrofolate + H2O = 2-dehydropantoate + (6S)-5,6,7,8-tetrahydrofolate. The protein operates within cofactor biosynthesis; (R)-pantothenate biosynthesis; (R)-pantoate from 3-methyl-2-oxobutanoate: step 1/2. In terms of biological role, probable 3-methyl-2-oxobutanoate hydroxymethyltransferase required for pantothenic acid biosynthesis. Acts downstream in the pantothenic acid pathway. The chain is 3-methyl-2-oxobutanoate hydroxymethyltransferase from Saccharomyces cerevisiae (strain ATCC 204508 / S288c) (Baker's yeast).